Consider the following 300-residue polypeptide: Ribonuclease HIII (300 aa).

Positions 86–300 (RPRLGVDESG…FYEICDSTDI (215 aa)) constitute an RNase H type-2 domain. A divalent metal cation contacts are provided by aspartate 92, glutamate 93, and aspartate 196.

This sequence belongs to the RNase HII family. RnhC subfamily. Requires Mn(2+) as cofactor. Mg(2+) is required as a cofactor.

Its subcellular location is the cytoplasm. The catalysed reaction is Endonucleolytic cleavage to 5'-phosphomonoester.. Endonuclease that specifically degrades the RNA of RNA-DNA hybrids. The chain is Ribonuclease HIII from Chlamydia abortus (strain DSM 27085 / S26/3) (Chlamydophila abortus).